The chain runs to 410 residues: Cysteine desulfurase IscS (410 aa).

Residues 79-80 (AT), Asn159, Gln187, and 207-209 (SGH) contribute to the pyridoxal 5'-phosphate site. Position 210 is an N6-(pyridoxal phosphate)lysine (Lys210). Thr248 serves as a coordination point for pyridoxal 5'-phosphate. Cys334 acts as the Cysteine persulfide intermediate in catalysis. Residue Cys334 coordinates [2Fe-2S] cluster.

Belongs to the class-V pyridoxal-phosphate-dependent aminotransferase family. NifS/IscS subfamily. Homodimer. Forms a heterotetramer with IscU, interacts with other sulfur acceptors. Pyridoxal 5'-phosphate serves as cofactor.

The protein localises to the cytoplasm. The enzyme catalyses (sulfur carrier)-H + L-cysteine = (sulfur carrier)-SH + L-alanine. It participates in cofactor biosynthesis; iron-sulfur cluster biosynthesis. Master enzyme that delivers sulfur to a number of partners involved in Fe-S cluster assembly, tRNA modification or cofactor biosynthesis. Catalyzes the removal of elemental sulfur atoms from cysteine to produce alanine. Functions as a sulfur delivery protein for Fe-S cluster synthesis onto IscU, an Fe-S scaffold assembly protein, as well as other S acceptor proteins. This Ehrlichia chaffeensis (strain ATCC CRL-10679 / Arkansas) protein is Cysteine desulfurase IscS.